A 447-amino-acid chain; its full sequence is Argininosuccinate synthase (447 aa).

ATP is bound by residues 17 to 25 and Ala-43; that span reads AFSGGLDTS. L-citrulline is bound at residue Tyr-99. Residues Gly-129 and Thr-131 each coordinate ATP. L-aspartate-binding residues include Thr-131, Asn-135, and Asp-136. Asn-135 contacts L-citrulline. Residue Asp-136 participates in ATP binding. Positions 139 and 192 each coordinate L-citrulline. Asp-194 serves as a coordination point for ATP. L-citrulline-binding residues include Thr-201, Glu-203, and Glu-280.

This sequence belongs to the argininosuccinate synthase family. Type 2 subfamily. Homotetramer.

The protein resides in the cytoplasm. The enzyme catalyses L-citrulline + L-aspartate + ATP = 2-(N(omega)-L-arginino)succinate + AMP + diphosphate + H(+). The protein operates within amino-acid biosynthesis; L-arginine biosynthesis; L-arginine from L-ornithine and carbamoyl phosphate: step 2/3. This is Argininosuccinate synthase from Salmonella paratyphi B (strain ATCC BAA-1250 / SPB7).